We begin with the raw amino-acid sequence, 228 residues long: Small ribosomal subunit protein uS7m (228 aa).

Residues 1-33 (MAASVRHLLKPWTPSLCLMRWSRYNPYYLDPEP) constitute a mitochondrion transit peptide.

It belongs to the universal ribosomal protein uS7 family. As to quaternary structure, component of the mitochondrial ribosome small subunit (28S) which comprises a 12S rRNA and about 30 distinct proteins.

The protein localises to the mitochondrion. The protein is Small ribosomal subunit protein uS7m (mrps7) of Danio rerio (Zebrafish).